Reading from the N-terminus, the 140-residue chain is MIYGVGTDIIEIARVQGVMERTRGRFAEKVLGADELAKYHARKARSERRGLAFLATRFAAKEAFSKAIGLGMRWPMTWRAMELMNLPSGEPTPICHGELAQWIAERGITVRVSVSDERDYAVAFAIAERGGHAAVPENPA.

Mg(2+) is bound by residues Asp-8 and Glu-62.

Belongs to the P-Pant transferase superfamily. AcpS family. Mg(2+) serves as cofactor.

The protein resides in the cytoplasm. It carries out the reaction apo-[ACP] + CoA = holo-[ACP] + adenosine 3',5'-bisphosphate + H(+). In terms of biological role, transfers the 4'-phosphopantetheine moiety from coenzyme A to a Ser of acyl-carrier-protein. This Cupriavidus pinatubonensis (strain JMP 134 / LMG 1197) (Cupriavidus necator (strain JMP 134)) protein is Holo-[acyl-carrier-protein] synthase.